The following is a 70-amino-acid chain: MFTTKKSMLLLFFLGTINLSLCEEERNAEEERRDEPDEMNVEVEKRFLPLIAGLAANFLPKIFCAITKKC.

A signal peptide spans 1 to 22; sequence MFTTKKSMLLLFFLGTINLSLC. A propeptide spanning residues 23-44 is cleaved from the precursor; sequence EEERNAEEERRDEPDEMNVEVE. The cysteines at positions 64 and 70 are disulfide-linked.

As to expression, expressed by the skin glands.

It is found in the secreted. Functionally, antimicrobial activity against the Gram-negative bacterium E.coli, the Gram-positive bacterium S.aureus and the yeast C.albicans. This is Brevinin-1PLb from Lithobates palustris (Pickerel frog).